The primary structure comprises 311 residues: Probable manganese-dependent inorganic pyrophosphatase (311 aa).

Mn(2+) is bound by residues His-9, Asp-13, Asp-15, Asp-75, His-97, and Asp-149.

This sequence belongs to the PPase class C family. Mn(2+) is required as a cofactor.

It localises to the cytoplasm. It catalyses the reaction diphosphate + H2O = 2 phosphate + H(+). The chain is Probable manganese-dependent inorganic pyrophosphatase from Lactobacillus gasseri (strain ATCC 33323 / DSM 20243 / BCRC 14619 / CIP 102991 / JCM 1131 / KCTC 3163 / NCIMB 11718 / NCTC 13722 / AM63).